The primary structure comprises 167 residues: Fimbrial adapter PapF (167 aa).

The first 18 residues, 1 to 18 (MIRLSLFISLLLTSVAVL), serve as a signal peptide directing secretion.

It is found in the secreted. Its subcellular location is the fimbrium. Adapter that links the PapG adhesin to the distal end of the tip fibrillum. PapF is required for the correct presentation of the adhesin at the distal end of the tip fibrillum. Pili are polar filaments radiating from the surface of the bacterium to a length of 0.5-1.5 micrometers and numbering 100-300 per cell, and enable bacteria to colonize the epithelium of specific host organs. This is Fimbrial adapter PapF (papF) from Escherichia coli.